A 363-amino-acid chain; its full sequence is Dihydroorotate dehydrogenase (quinone) (363 aa).

FMN contacts are provided by residues 62-66 (AGYDK) and threonine 86. Residue lysine 66 coordinates substrate. A substrate-binding site is contributed by 111–115 (NRLGF). Asparagine 139 and asparagine 170 together coordinate FMN. Substrate is bound at residue asparagine 170. The active-site Nucleophile is serine 173. Residue asparagine 175 coordinates substrate. FMN contacts are provided by lysine 215 and serine 243. Position 244-245 (244-245 (NT)) interacts with substrate. Residues glycine 266, glycine 295, and 316-317 (YS) each bind FMN.

Belongs to the dihydroorotate dehydrogenase family. Type 2 subfamily. As to quaternary structure, monomer. FMN serves as cofactor.

Its subcellular location is the cell membrane. It catalyses the reaction (S)-dihydroorotate + a quinone = orotate + a quinol. Its pathway is pyrimidine metabolism; UMP biosynthesis via de novo pathway; orotate from (S)-dihydroorotate (quinone route): step 1/1. Catalyzes the conversion of dihydroorotate to orotate with quinone as electron acceptor. The chain is Dihydroorotate dehydrogenase (quinone) from Agrobacterium fabrum (strain C58 / ATCC 33970) (Agrobacterium tumefaciens (strain C58)).